We begin with the raw amino-acid sequence, 767 residues long: 5-methyltetrahydropteroyltriglutamate--homocysteine methyltransferase (767 aa).

Residue Lys19 coordinates 5-methyltetrahydropteroyltri-L-glutamate. Residue Ser89 is modified to Phosphoserine. 5-methyltetrahydropteroyltri-L-glutamate is bound at residue Asn126. The residue at position 242 (Ser242) is a Phosphoserine. Residues 444–446 (IGS) and Glu497 contribute to the L-homocysteine site. Residues 444–446 (IGS) and Glu497 each bind L-methionine. Residues Asp502, Tyr525, and 528–529 (RY) each bind 5-methyltetrahydropteroyltri-L-glutamate. Thr566 carries the post-translational modification Phosphothreonine. 5-methyltetrahydropteroyltri-L-glutamate is bound at residue Trp574. L-homocysteine is bound at residue Asp612. Asp612 is a binding site for L-methionine. Ser629 carries the phosphoserine modification. Residues His655, Cys657, and Glu677 each coordinate Zn(2+). Residue His705 is the Proton donor of the active site. Ser706 carries the post-translational modification Phosphoserine. Cys737 serves as a coordination point for Zn(2+).

Belongs to the vitamin-B12 independent methionine synthase family. Zn(2+) serves as cofactor.

It carries out the reaction 5-methyltetrahydropteroyltri-L-glutamate + L-homocysteine = tetrahydropteroyltri-L-glutamate + L-methionine. It participates in amino-acid biosynthesis; L-methionine biosynthesis via de novo pathway; L-methionine from L-homocysteine (MetE route): step 1/1. Its function is as follows. Catalyzes the transfer of a methyl group from 5-methyltetrahydrofolate to homocysteine resulting in methionine formation. The polypeptide is 5-methyltetrahydropteroyltriglutamate--homocysteine methyltransferase (MET6) (Saccharomyces cerevisiae (strain ATCC 204508 / S288c) (Baker's yeast)).